Reading from the N-terminus, the 255-residue chain is uncharacterized protein (255 aa).

The signal sequence occupies residues 1-23; that stretch reads MKRLNKLVLYISFLILVISFTAG. A lipid anchor (N-palmitoyl cysteine) is attached at C24. C24 carries S-diacylglycerol cysteine lipidation.

This sequence belongs to the staphylococcal tandem lipoprotein family.

Its subcellular location is the cell membrane. This is an uncharacterized protein from Staphylococcus aureus (strain NCTC 8325 / PS 47).